A 361-amino-acid polypeptide reads, in one-letter code: Chorismate synthase (361 aa).

Arg-48 and Arg-54 together coordinate NADP(+). FMN contacts are provided by residues 125 to 127 (RSS), 238 to 239 (NA), Gly-278, 293 to 297 (KPTSS), and Arg-319.

It belongs to the chorismate synthase family. Homotetramer. It depends on FMNH2 as a cofactor.

The enzyme catalyses 5-O-(1-carboxyvinyl)-3-phosphoshikimate = chorismate + phosphate. Its pathway is metabolic intermediate biosynthesis; chorismate biosynthesis; chorismate from D-erythrose 4-phosphate and phosphoenolpyruvate: step 7/7. Its function is as follows. Catalyzes the anti-1,4-elimination of the C-3 phosphate and the C-6 proR hydrogen from 5-enolpyruvylshikimate-3-phosphate (EPSP) to yield chorismate, which is the branch point compound that serves as the starting substrate for the three terminal pathways of aromatic amino acid biosynthesis. This reaction introduces a second double bond into the aromatic ring system. The protein is Chorismate synthase of Vibrio campbellii (strain ATCC BAA-1116).